The primary structure comprises 399 residues: Chorismate synthase (399 aa).

NADP(+)-binding residues include arginine 40 and arginine 46. FMN contacts are provided by residues 129-131, 257-258, glycine 302, 317-321, and arginine 343; these read RSS, QA, and KPISS.

Belongs to the chorismate synthase family. In terms of assembly, homotetramer. FMNH2 is required as a cofactor.

The catalysed reaction is 5-O-(1-carboxyvinyl)-3-phosphoshikimate = chorismate + phosphate. It functions in the pathway metabolic intermediate biosynthesis; chorismate biosynthesis; chorismate from D-erythrose 4-phosphate and phosphoenolpyruvate: step 7/7. Functionally, catalyzes the anti-1,4-elimination of the C-3 phosphate and the C-6 proR hydrogen from 5-enolpyruvylshikimate-3-phosphate (EPSP) to yield chorismate, which is the branch point compound that serves as the starting substrate for the three terminal pathways of aromatic amino acid biosynthesis. This reaction introduces a second double bond into the aromatic ring system. The sequence is that of Chorismate synthase from Chlorobium chlorochromatii (strain CaD3).